Consider the following 541-residue polypeptide: Membrane protein insertase YidC (541 aa).

5 consecutive transmembrane segments (helical) span residues 7–27, 346–368, 416–436, 454–474, and 495–515; these read LLVI…QLDY, IVQN…LYPL, LGGC…YWTF, LSAQ…MFLL, and PLIF…YWLV.

It belongs to the OXA1/ALB3/YidC family. Type 1 subfamily. Interacts with the Sec translocase complex via SecD. Specifically interacts with transmembrane segments of nascent integral membrane proteins during membrane integration.

The protein resides in the cell inner membrane. In terms of biological role, required for the insertion and/or proper folding and/or complex formation of integral membrane proteins into the membrane. Involved in integration of membrane proteins that insert both dependently and independently of the Sec translocase complex, as well as at least some lipoproteins. Aids folding of multispanning membrane proteins. This Pasteurella multocida (strain Pm70) protein is Membrane protein insertase YidC.